A 1017-amino-acid chain; its full sequence is Putative calcium-transporting ATPase 13, plasma membrane-type (1017 aa).

Methionine 1 bears the N-acetylmethionine mark. The Cytoplasmic portion of the chain corresponds to 1–147; it reads MRRNVSDHAE…NTYTRQPSKG (147 aa). Residues 20-31 form an interaction with calmodulin region; sequence LLELPKTLSKSN. Residues 148–168 traverse the membrane as a helical segment; that stretch reads LFHFVVEAFKDLTILILLGCA. Over 169–186 the chain is Lumenal; sequence TLSLGFGIKEHGLKEGWY. Residues 187–207 traverse the membrane as a helical segment; it reads DGGSIFVAVFLVVAVSAVSNF. Over 208 to 336 the chain is Cytoplasmic; that stretch reads RQNRQFDKLS…NEQTPLQSRL (129 aa). Residues 337–356 traverse the membrane as a helical segment; that stretch reads DKLTSSIGKVGLLVAFLVLL. The Lumenal segment spans residues 357 to 393; that stretch reads VLLIRYFTGTTKDESGNREYNGKTTKSDEIVNAVVKM. The helical transmembrane segment at 394-411 threads the bilayer; the sequence is VAAAVTIIVVAIPEGLPL. The Cytoplasmic segment spans residues 412-802; it reads AVTLTLAYSM…KWGRCVYNNI (391 aa). Residue aspartate 449 is the 4-aspartylphosphate intermediate of the active site. 2 residues coordinate Mg(2+): aspartate 747 and aspartate 751. The helical transmembrane segment at 803 to 821 threads the bilayer; that stretch reads QKFIQFQLTVNVAALVINF. At 822–832 the chain is on the lumenal side; sequence VAAVSAGDVPL. Residues 833–853 form a helical membrane-spanning segment; it reads TAVQLLWVNLIMDTLGALALA. The Cytoplasmic portion of the chain corresponds to 854 to 873; it reads TEKPTNDLMKKKPIGRVAPL. Residues 874–896 form a helical membrane-spanning segment; it reads ITNIMWRNLLAQAFYQISVLLVL. The Lumenal segment spans residues 897–905; the sequence is QFRGRSIFN. The chain crosses the membrane as a helical span at residues 906 to 926; the sequence is VTEKVKNTLIFNTFVLCQVFN. The Cytoplasmic portion of the chain corresponds to 927–944; that stretch reads EFNARSLEKKNVFKGLHK. A helical transmembrane segment spans residues 945-966; the sequence is NRLFIGIIVVTVVLQVVMVEFL. The Lumenal segment spans residues 967 to 976; the sequence is KRFADTERLN. The helical transmembrane segment at 977–998 threads the bilayer; the sequence is LGQWGVCIAIAAASWPIGWLVK. The Cytoplasmic segment spans residues 999–1002; that stretch reads SVPV.

Belongs to the cation transport ATPase (P-type) (TC 3.A.3) family. Type IIB subfamily.

Its subcellular location is the membrane. The enzyme catalyses Ca(2+)(in) + ATP + H2O = Ca(2+)(out) + ADP + phosphate + H(+). With respect to regulation, activated by calmodulin. Its function is as follows. This magnesium-dependent enzyme catalyzes the hydrolysis of ATP coupled with the translocation of calcium from the cytosol out of the cell or into organelles. The sequence is that of Putative calcium-transporting ATPase 13, plasma membrane-type (ACA13) from Arabidopsis thaliana (Mouse-ear cress).